We begin with the raw amino-acid sequence, 202 residues long: Adenylyl-sulfate kinase (202 aa).

Glycine 31 to serine 38 is a binding site for ATP. Serine 105 acts as the Phosphoserine intermediate in catalysis.

The protein belongs to the APS kinase family.

The catalysed reaction is adenosine 5'-phosphosulfate + ATP = 3'-phosphoadenylyl sulfate + ADP + H(+). Its pathway is sulfur metabolism; hydrogen sulfide biosynthesis; sulfite from sulfate: step 2/3. In terms of biological role, catalyzes the synthesis of activated sulfate. This Saccharomyces cerevisiae (strain ATCC 204508 / S288c) (Baker's yeast) protein is Adenylyl-sulfate kinase (MET14).